We begin with the raw amino-acid sequence, 233 residues long: MADS-box transcription factor 56 (233 aa).

Residues 1–61 (MVRGRTELKR…GRLYEFASAP (61 aa)) enclose the MADS-box domain. The K-box domain maps to 87-177 (IQQVKDDTLG…RGKHRNLEAA (91 aa)).

It localises to the nucleus. Probable transcription factor. The sequence is that of MADS-box transcription factor 56 (MADS56) from Oryza sativa subsp. japonica (Rice).